The chain runs to 187 residues: Proenkephalin-A (187 aa).

Propeptides lie at residues 52–70 (MDEL…EILA), 80–143 (DAEE…KMLQ), 153–163 (VGRPEWWMDYQ), and 173–187 (FADS…ESYS). Positions 81 to 132 (AEEEEDALASSSDLLKELLGPGETETAAAPRGRDDEDVSKSHGGFMRALKGS) are disordered. Residues 88–99 (LASSSDLLKELL) show a composition bias toward low complexity. The segment covering 111-120 (RGRDDEDVSK) has biased composition (basic and acidic residues). Ser187 bears the Phosphoserine mark.

It belongs to the opioid neuropeptide precursor family. Processed and degraded by ACE. Post-translationally, the N-terminal domain contains 6 conserved cysteines thought to be involved in disulfide bonding and/or processing. In terms of processing, proenkephalin-A is cleaved by CTSL to generate Met-enkephalin.

It is found in the cytoplasmic vesicle. Its subcellular location is the secretory vesicle. The protein resides in the chromaffin granule lumen. It localises to the secreted. Neuropeptide that competes with and mimic the effects of opiate drugs. They play a role in a number of physiologic functions, including pain perception and responses to stress. The polypeptide is Proenkephalin-A (PENK) (Felis catus (Cat)).